Here is a 120-residue protein sequence, read N- to C-terminus: uncharacterized protein (120 aa).

The first 16 residues, 1–16, serve as a signal peptide directing secretion; the sequence is MFKFILLCFCINFAFS.

This is an uncharacterized protein from Acheta domesticus (House cricket).